Consider the following 621-residue polypeptide: MRILQLHCDSIEYTPTKKEIKSAEEIENPQTQRLEEIVVAFVAIEDGDDSSVAKNAISQIKNSMEKIGCKKLLLYPYAHLSSNLAKPSTAMSLLQEMESEASDLEVSHSPFGWTKSYKVQVKGHPLAESSKVVTKDSTTKDDDEDTSDALKGESTIRSYWKIMSPDGTMINIGDYDFSNHKKLEILAKYESAKQRQVDEPPPHVALMKKLAIADYEPASDSGNMRFFPNGRLMKSLIERYVTDRVKEYGGYEVETPIMYDSEHPSMVSYFNRFPARQYNIDSEGKKLFLRFAACFGQFLMANQFQMSYKNLPYKLYELTRYSFRREQSGELVGLRRLRAFTMPDCHAFCKDIPQAVDEIKVRFDLSQSVLKELGIDESDYDMAIRFTEDFYNENKSAIEELVKKHGRPVLVEMWKEKFFYFVLKWEFNFIDNLGKASALSTDQIDVENGDRYGIEFVDENNTAQHPIILHNSPSGAIERIIYALLEKAADDSKKGKKPQLPLWLAPTQVRIIPLKEEFYDFCNNLCDKISAQNVRVDVDDRNESIGKRIREAEKEWIQYILVIGEKEAGSENLSIRDRQTGNVREVSFDDFMNEINEQTSGKPYTGLNQSQHLSKRPQLMV.

The segment at 1–137 (MRILQLHCDS…ESSKVVTKDS (137 aa)) is editing domain. The disordered stretch occupies residues 128-150 (ESSKVVTKDSTTKDDDEDTSDAL). Residues 202 to 501 (PHVALMKKLA…SKKGKKPQLP (300 aa)) form a catalytic region. Cys-294, His-346, and His-470 together coordinate Zn(2+). A compositionally biased stretch (polar residues) spans 598-612 (QTSGKPYTGLNQSQH). A disordered region spans residues 598-621 (QTSGKPYTGLNQSQHLSKRPQLMV).

This sequence belongs to the class-II aminoacyl-tRNA synthetase family. Homodimer. Zn(2+) is required as a cofactor.

Its subcellular location is the cytoplasm. It carries out the reaction tRNA(Thr) + L-threonine + ATP = L-threonyl-tRNA(Thr) + AMP + diphosphate + H(+). Catalyzes the attachment of threonine to tRNA(Thr) in a two-step reaction: L-threonine is first activated by ATP to form Thr-AMP and then transferred to the acceptor end of tRNA(Thr). Also edits incorrectly charged L-seryl-tRNA(Thr). The protein is Threonine--tRNA ligase of Nitrosopumilus maritimus (strain SCM1).